Reading from the N-terminus, the 296-residue chain is Ribonuclease HIII (296 aa).

The RNase H type-2 domain maps to 80 to 296 (LALIGSDEVG…NTKKAYQRLK (217 aa)). A divalent metal cation is bound by residues D86, E87, and D191.

It belongs to the RNase HII family. RnhC subfamily. Mn(2+) is required as a cofactor. Requires Mg(2+) as cofactor.

It is found in the cytoplasm. It carries out the reaction Endonucleolytic cleavage to 5'-phosphomonoester.. Functionally, endonuclease that specifically degrades the RNA of RNA-DNA hybrids. This is Ribonuclease HIII from Streptococcus thermophilus (strain ATCC BAA-250 / LMG 18311).